The following is an 835-amino-acid chain: Protein translocase subunit SecA 1 (835 aa).

ATP-binding positions include glutamine 85, 103-107, and aspartate 492; that span reads GEGKT. A disordered region spans residues 788–807; sequence VQGEAVHPSSDGEEAKKKPV. Positions 819, 821, 830, and 831 each coordinate Zn(2+).

The protein belongs to the SecA family. Monomer and homodimer. Part of the essential Sec protein translocation apparatus which comprises SecA, SecYEG and auxiliary proteins SecDF. Other proteins may also be involved. It depends on Zn(2+) as a cofactor.

The protein localises to the cell membrane. It localises to the cytoplasm. The catalysed reaction is ATP + H2O + cellular proteinSide 1 = ADP + phosphate + cellular proteinSide 2.. Its function is as follows. Part of the Sec protein translocase complex. Interacts with the SecYEG preprotein conducting channel. Has a central role in coupling the hydrolysis of ATP to the transfer of proteins into and across the cell membrane, serving as an ATP-driven molecular motor driving the stepwise translocation of polypeptide chains across the membrane. This is Protein translocase subunit SecA 1 from Bacillus thuringiensis subsp. konkukian (strain 97-27).